A 469-amino-acid chain; its full sequence is Probable periplasmic serine endoprotease DegP-like (469 aa).

An N-terminal signal peptide occupies residues 1-25; it reads MKVCQKYTAVLLVWLSAVVSMRAGA. Catalysis depends on charge relay system residues His-108, Asp-138, and Ser-211. Substrate is bound by residues 209-211 and 266-270; these read GNS and LGVLI. 2 PDZ domains span residues 255–346 and 352–457; these read LKDT…VRRG and AVEI…IRQG.

This sequence belongs to the peptidase S1C family.

It localises to the periplasm. It carries out the reaction Acts on substrates that are at least partially unfolded. The cleavage site P1 residue is normally between a pair of hydrophobic residues, such as Val-|-Val.. Functionally, might be efficient in the degradation of transiently denatured and unfolded proteins which accumulate in the periplasm following stress conditions. This is Probable periplasmic serine endoprotease DegP-like (mucD) from Hahella chejuensis (strain KCTC 2396).